The primary structure comprises 119 residues: Putative membrane protein insertion efficiency factor (119 aa).

Belongs to the UPF0161 family.

It localises to the cell inner membrane. Its function is as follows. Could be involved in insertion of integral membrane proteins into the membrane. The sequence is that of Putative membrane protein insertion efficiency factor from Agrobacterium fabrum (strain C58 / ATCC 33970) (Agrobacterium tumefaciens (strain C58)).